Reading from the N-terminus, the 188-residue chain is Elongation factor P (188 aa).

Lysine 34 carries the post-translational modification N6-(3,6-diaminohexanoyl)-5-hydroxylysine.

The protein belongs to the elongation factor P family. In terms of processing, may be beta-lysylated on the epsilon-amino group of Lys-34 by the combined action of EpmA and EpmB, and then hydroxylated on the C5 position of the same residue by EpmC (if this protein is present). Lysylation is critical for the stimulatory effect of EF-P on peptide-bond formation. The lysylation moiety may extend toward the peptidyltransferase center and stabilize the terminal 3-CCA end of the tRNA. Hydroxylation of the C5 position on Lys-34 may allow additional potential stabilizing hydrogen-bond interactions with the P-tRNA.

It is found in the cytoplasm. It participates in protein biosynthesis; polypeptide chain elongation. Its function is as follows. Involved in peptide bond synthesis. Alleviates ribosome stalling that occurs when 3 or more consecutive Pro residues or the sequence PPG is present in a protein, possibly by augmenting the peptidyl transferase activity of the ribosome. Modification of Lys-34 is required for alleviation. The sequence is that of Elongation factor P from Photorhabdus laumondii subsp. laumondii (strain DSM 15139 / CIP 105565 / TT01) (Photorhabdus luminescens subsp. laumondii).